We begin with the raw amino-acid sequence, 383 residues long: ATP phosphoribosyltransferase regulatory subunit (383 aa).

This sequence belongs to the class-II aminoacyl-tRNA synthetase family. HisZ subfamily. As to quaternary structure, heteromultimer composed of HisG and HisZ subunits.

Its subcellular location is the cytoplasm. It participates in amino-acid biosynthesis; L-histidine biosynthesis; L-histidine from 5-phospho-alpha-D-ribose 1-diphosphate: step 1/9. Its function is as follows. Required for the first step of histidine biosynthesis. May allow the feedback regulation of ATP phosphoribosyltransferase activity by histidine. The sequence is that of ATP phosphoribosyltransferase regulatory subunit from Chromobacterium violaceum (strain ATCC 12472 / DSM 30191 / JCM 1249 / CCUG 213 / NBRC 12614 / NCIMB 9131 / NCTC 9757 / MK).